Here is a 191-residue protein sequence, read N- to C-terminus: Holliday junction branch migration complex subunit RuvA (191 aa).

The segment at 1–63 (MIRYLRGLVL…EEGLSLYGFP (63 aa)) is domain I. A domain II region spans residues 64–136 (DEENLALFEL…LKGKVPPHLL (73 aa)). The interval 136 to 140 (LAGEK) is flexible linker. Positions 141 to 191 (VESEAAEEAVMALAALGFKEAQARAVVLDLLAQNPKARAQDLIKEALKRLR) are domain III.

It belongs to the RuvA family. As to quaternary structure, homotetramer. Forms an RuvA(8)-RuvB(12)-Holliday junction (HJ) complex. HJ DNA is sandwiched between 2 RuvA tetramers; dsDNA enters through RuvA and exits via RuvB. An RuvB hexamer assembles on each DNA strand where it exits the tetramer. Each RuvB hexamer is contacted by two RuvA subunits (via domain III) on 2 adjacent RuvB subunits; this complex drives branch migration. In the full resolvosome a probable DNA-RuvA(4)-RuvB(12)-RuvC(2) complex forms which resolves the HJ.

Its subcellular location is the cytoplasm. Its function is as follows. The RuvA-RuvB-RuvC complex processes Holliday junction (HJ) DNA during genetic recombination and DNA repair, while the RuvA-RuvB complex plays an important role in the rescue of blocked DNA replication forks via replication fork reversal (RFR). RuvA specifically binds to HJ cruciform DNA, conferring on it an open structure. The RuvB hexamer acts as an ATP-dependent pump, pulling dsDNA into and through the RuvAB complex. HJ branch migration allows RuvC to scan DNA until it finds its consensus sequence, where it cleaves and resolves the cruciform DNA. The polypeptide is Holliday junction branch migration complex subunit RuvA (Thermus thermophilus (strain ATCC BAA-163 / DSM 7039 / HB27)).